We begin with the raw amino-acid sequence, 440 residues long: MPIPPPPPPPPGPPPPPTFNQANTEQPKLSRDEQRNRGALLQDICKGTKLKKVTNVNDRSAPVIEKPRGSSGGYGPGAAALQPKGGLFQGGVPKLRPVGAKDASEAPAGKPALQVPSSRAAAPRPPGSAASGRPHDDTDSNRASLPELPRMQRPSLPDLSRPNTASGTGMKHSSSAPPPPPPGRRANAPPTPLPLHSNKAQAYNREKPLPPTPGQRLHPGREGHPAPPPVKPPPSPVNIRTGPSGQSLAPPPPPYRQPPGVPNGPSSPTNESAPELPQRHNSLHRKTPGPVRGLAPPPPTSATPSLLSNRPPPPAREPPSRGAAPPPPPPMIRNGARDAPPPPPPYRMHGSEPPSRGKPPPPPSRTPAGPPPPPPPPLRNGHRDSITTVRSFLDDFESKYSFHPVEDFPAPEEYKHLQRVYPSKTNRAARGAPPLPPILR.

Residues 1–18 (MPIPPPPPPPPGPPPPPT) show a composition bias toward pro residues. The interval 1-38 (MPIPPPPPPPPGPPPPPTFNQANTEQPKLSRDEQRNRG) is disordered. The region spanning 36-53 (NRGALLQDICKGTKLKKV) is the WH2 domain. The residue at position 37 (Arg37) is an Asymmetric dimethylarginine. The interval 49 to 52 (KLKK) is binds actin. 2 disordered regions span residues 56 to 386 (VNDR…RDSI) and 419 to 440 (RVYP…PILR). The span at 116–132 (PSSRAAAPRPPGSAASG) shows a compositional bias: low complexity. Composition is skewed to pro residues over residues 176–193 (APPP…PTPL), 225–236 (PAPPPVKPPPSP), 249–262 (APPP…PGVP), and 356–378 (RGKP…PPPL).

This sequence belongs to the verprolin family. In terms of assembly, interacts with WASL and WASP, and this interaction results in cytoplasmic relocation of these two proteins along actin filaments. Interacts with NCK2 resulting in the localization to sites of focal adhesions.

It localises to the cytoplasm. The protein localises to the cytoskeleton. In terms of biological role, plays an active role in the formation of cell surface protrusions downstream of activated PDGFB receptors. Plays an important role in actin-microspike formation through cooperation with WASL. May cooperate with WASP and WASL to induce mobilization and reorganization of the actin filament system. The sequence is that of WAS/WASL-interacting protein family member 2 (Wipf2) from Mus musculus (Mouse).